Consider the following 161-residue polypeptide: Nucleoside diphosphate kinase (161 aa).

ATP-binding residues include Lys-12, Phe-60, Arg-88, Thr-94, and Arg-105. The Pros-phosphohistidine intermediate role is filled by His-121.

The protein belongs to the NDK family. It depends on Mg(2+) as a cofactor.

It is found in the cytoplasm. The enzyme catalyses a 2'-deoxyribonucleoside 5'-diphosphate + ATP = a 2'-deoxyribonucleoside 5'-triphosphate + ADP. It catalyses the reaction a ribonucleoside 5'-diphosphate + ATP = a ribonucleoside 5'-triphosphate + ADP. Its function is as follows. Major role in the synthesis of nucleoside triphosphates other than ATP. The ATP gamma phosphate is transferred to the NDP beta phosphate via a ping-pong mechanism, using a phosphorylated active-site intermediate. This chain is Nucleoside diphosphate kinase, found in Pyrococcus furiosus (strain ATCC 43587 / DSM 3638 / JCM 8422 / Vc1).